The chain runs to 430 residues: Adenylosuccinate synthetase (430 aa).

GTP is bound by residues 12–18 (GDEGKGK) and 40–42 (GHT). D13 serves as the catalytic Proton acceptor. D13 and G40 together coordinate Mg(2+). IMP contacts are provided by residues 13–16 (DEGK), 38–41 (NAGH), T128, R142, Q223, T238, and R302. H41 (proton donor) is an active-site residue. Residue 298-304 (VNTGRKR) coordinates substrate. GTP-binding positions include R304, 330–332 (KLD), and 412–414 (GVG).

Belongs to the adenylosuccinate synthetase family. As to quaternary structure, homodimer. Mg(2+) serves as cofactor.

It is found in the cytoplasm. It catalyses the reaction IMP + L-aspartate + GTP = N(6)-(1,2-dicarboxyethyl)-AMP + GDP + phosphate + 2 H(+). Its pathway is purine metabolism; AMP biosynthesis via de novo pathway; AMP from IMP: step 1/2. In terms of biological role, plays an important role in the de novo pathway of purine nucleotide biosynthesis. Catalyzes the first committed step in the biosynthesis of AMP from IMP. In Corynebacterium glutamicum (strain ATCC 13032 / DSM 20300 / JCM 1318 / BCRC 11384 / CCUG 27702 / LMG 3730 / NBRC 12168 / NCIMB 10025 / NRRL B-2784 / 534), this protein is Adenylosuccinate synthetase.